Consider the following 924-residue polypeptide: Ubiquitin carboxyl-terminal hydrolase 5 (924 aa).

Positions Leu15–Ser145 constitute a DUSP domain. Positions Thr64–Lys83 are enriched in polar residues. Residues Thr64 to Arg87 are disordered. The 600-residue stretch at Thr317 to Lys916 folds into the USP domain. The Nucleophile role is filled by Cys326. Over residues Arg648–Ser667 the composition is skewed to basic and acidic residues. The interval Arg648–Ser690 is disordered. His874 (proton acceptor) is an active-site residue.

The protein belongs to the peptidase C19 family.

The enzyme catalyses Thiol-dependent hydrolysis of ester, thioester, amide, peptide and isopeptide bonds formed by the C-terminal Gly of ubiquitin (a 76-residue protein attached to proteins as an intracellular targeting signal).. Recognizes and hydrolyzes the peptide bond at the C-terminal Gly of ubiquitin. Involved in the processing of poly-ubiquitin precursors as well as that of ubiquitinated proteins. This chain is Ubiquitin carboxyl-terminal hydrolase 5 (UBP5), found in Arabidopsis thaliana (Mouse-ear cress).